The chain runs to 204 residues: Putative peptidase PfaP (204 aa).

The N-terminal stretch at 1–27 (MRLRKTRKIVVSMKDMAASGGYYIASS) is a signal peptide. The active-site Nucleophile is the serine 19. Lysine 70 (proton donor/acceptor) is an active-site residue.

The protein belongs to the peptidase S49 family.

Functionally, possible protease. May be involved in export of periplasmic flagella proteins. The protein is Putative peptidase PfaP (pfaP) of Leptospira borgpetersenii.